Reading from the N-terminus, the 513-residue chain is Alpha,alpha-trehalose-phosphate synthase [UDP-forming] (513 aa).

Tyrosine 40 is modified (phosphotyrosine). D-glucose 6-phosphate-binding residues include tyrosine 104 and aspartate 158. UDP-binding residues include arginine 294 and lysine 299. Residues arginine 294 and lysine 299 each coordinate UDP-alpha-D-glucose. Residue arginine 332 participates in D-glucose 6-phosphate binding. Residue 393–401 (DGMNLVSYE) participates in UDP-alpha-D-glucose binding. Residue 397-401 (LVSYE) participates in UDP binding. Position 503 is a phosphoserine (serine 503).

This sequence belongs to the glycosyltransferase 20 family. In terms of assembly, homomer. Component of the trehalose synthase complex that contains at least tps1, ntp1 and tpp1. Interacts with tpp1. Interacts with ntp1; the interaction is independent of stress conditions.

The protein localises to the cytoplasm. It is found in the nucleus. The catalysed reaction is D-glucose 6-phosphate + UDP-alpha-D-glucose = alpha,alpha-trehalose 6-phosphate + UDP + H(+). It functions in the pathway carbohydrate biosynthesis. In terms of biological role, synthase catalytic subunit of the trehalose synthase complex that catalyzes the production of trehalose from glucose-6-phosphate and UDP-alpha-D-glucose in a two step process. The disaccharide trehalose serves as a storage carbohydrate that is mobilized during nutrient stress and spore germination. Together with ntp1, regulates the level of trehalose as a protectant for cell integrity during thermal and osmotic stress. The chain is Alpha,alpha-trehalose-phosphate synthase [UDP-forming] from Schizosaccharomyces pombe (strain 972 / ATCC 24843) (Fission yeast).